A 162-amino-acid polypeptide reads, in one-letter code: Cyclic pyranopterin monophosphate synthase (162 aa).

Residues 79–81 (LCH) and 117–118 (ME) each bind substrate. Asp132 is a catalytic residue.

It belongs to the MoaC family. Homohexamer; trimer of dimers.

It carries out the reaction (8S)-3',8-cyclo-7,8-dihydroguanosine 5'-triphosphate = cyclic pyranopterin phosphate + diphosphate. It participates in cofactor biosynthesis; molybdopterin biosynthesis. In terms of biological role, catalyzes the conversion of (8S)-3',8-cyclo-7,8-dihydroguanosine 5'-triphosphate to cyclic pyranopterin monophosphate (cPMP). In Bordetella petrii (strain ATCC BAA-461 / DSM 12804 / CCUG 43448), this protein is Cyclic pyranopterin monophosphate synthase.